A 58-amino-acid polypeptide reads, in one-letter code: Small ribosomal subunit protein bS21 (58 aa).

A compositionally biased stretch (basic and acidic residues) spans 31 to 42 (EIRKREHYEKPS). Positions 31-58 (EIRKREHYEKPSVKRKKKSEAARKRKYN) are disordered. Residues 43 to 58 (VKRKKKSEAARKRKYN) show a composition bias toward basic residues.

It belongs to the bacterial ribosomal protein bS21 family.

The sequence is that of Small ribosomal subunit protein bS21 from Agathobacter rectalis (strain ATCC 33656 / DSM 3377 / JCM 17463 / KCTC 5835 / VPI 0990) (Eubacterium rectale).